Reading from the N-terminus, the 364-residue chain is tRNA N6-adenosine threonylcarbamoyltransferase (364 aa).

Positions 118 and 122 each coordinate Fe cation. Substrate-binding positions include 140 to 144, Asp-173, Gly-186, and Asn-288; that span reads LVSGG. Asp-316 provides a ligand contact to Fe cation.

The protein belongs to the KAE1 / TsaD family. Fe(2+) serves as cofactor.

It localises to the cytoplasm. The catalysed reaction is L-threonylcarbamoyladenylate + adenosine(37) in tRNA = N(6)-L-threonylcarbamoyladenosine(37) in tRNA + AMP + H(+). Functionally, required for the formation of a threonylcarbamoyl group on adenosine at position 37 (t(6)A37) in tRNAs that read codons beginning with adenine. Is involved in the transfer of the threonylcarbamoyl moiety of threonylcarbamoyl-AMP (TC-AMP) to the N6 group of A37, together with TsaE and TsaB. TsaD likely plays a direct catalytic role in this reaction. This Cereibacter sphaeroides (strain KD131 / KCTC 12085) (Rhodobacter sphaeroides) protein is tRNA N6-adenosine threonylcarbamoyltransferase.